Here is a 360-residue protein sequence, read N- to C-terminus: Phosphoserine aminotransferase (360 aa).

Arg43 is an L-glutamate binding site. Residues 77 to 78 (AS), Trp103, Thr152, Asp172, and Gln195 each bind pyridoxal 5'-phosphate. Position 196 is an N6-(pyridoxal phosphate)lysine (Lys196). 237 to 238 (NT) serves as a coordination point for pyridoxal 5'-phosphate.

This sequence belongs to the class-V pyridoxal-phosphate-dependent aminotransferase family. SerC subfamily. As to quaternary structure, homodimer. It depends on pyridoxal 5'-phosphate as a cofactor.

Its subcellular location is the cytoplasm. It catalyses the reaction O-phospho-L-serine + 2-oxoglutarate = 3-phosphooxypyruvate + L-glutamate. It carries out the reaction 4-(phosphooxy)-L-threonine + 2-oxoglutarate = (R)-3-hydroxy-2-oxo-4-phosphooxybutanoate + L-glutamate. It functions in the pathway amino-acid biosynthesis; L-serine biosynthesis; L-serine from 3-phospho-D-glycerate: step 2/3. Its pathway is cofactor biosynthesis; pyridoxine 5'-phosphate biosynthesis; pyridoxine 5'-phosphate from D-erythrose 4-phosphate: step 3/5. Catalyzes the reversible conversion of 3-phosphohydroxypyruvate to phosphoserine and of 3-hydroxy-2-oxo-4-phosphonooxybutanoate to phosphohydroxythreonine. The chain is Phosphoserine aminotransferase from Syntrophobacter fumaroxidans (strain DSM 10017 / MPOB).